A 137-amino-acid chain; its full sequence is Large ribosomal subunit protein uL16 (137 aa).

Belongs to the universal ribosomal protein uL16 family. As to quaternary structure, part of the 50S ribosomal subunit.

Its function is as follows. Binds 23S rRNA and is also seen to make contacts with the A and possibly P site tRNAs. The protein is Large ribosomal subunit protein uL16 of Bartonella henselae (strain ATCC 49882 / DSM 28221 / CCUG 30454 / Houston 1) (Rochalimaea henselae).